Reading from the N-terminus, the 194-residue chain is Lymphocyte antigen 6 complex locus protein G5b (194 aa).

The N-terminal stretch at 1-18 (MRARVLVGMLTMVGFAMG) is a signal peptide. The 93-residue stretch at 26 to 118 (RTCHLCLLED…SAQHQSTLRG (93 aa)) folds into the UPAR/Ly6 domain. 5 disulfides stabilise this stretch: Cys-28–Cys-55, Cys-31–Cys-40, Cys-47–Cys-73, Cys-81–Cys-98, and Cys-99–Cys-104. Residue Asn-63 is glycosylated (N-linked (GlcNAc...) asparagine). Asn-141 carries an N-linked (GlcNAc...) asparagine glycan.

In terms of assembly, monomer. Post-translationally, N-glycosylated.

It localises to the secreted. The protein is Lymphocyte antigen 6 complex locus protein G5b (Ly6g5b) of Mus musculus (Mouse).